We begin with the raw amino-acid sequence, 132 residues long: Ribosome-binding factor A (132 aa).

It belongs to the RbfA family. As to quaternary structure, monomer. Binds 30S ribosomal subunits, but not 50S ribosomal subunits or 70S ribosomes.

The protein resides in the cytoplasm. Its function is as follows. One of several proteins that assist in the late maturation steps of the functional core of the 30S ribosomal subunit. Associates with free 30S ribosomal subunits (but not with 30S subunits that are part of 70S ribosomes or polysomes). Required for efficient processing of 16S rRNA. May interact with the 5'-terminal helix region of 16S rRNA. In Teredinibacter turnerae (strain ATCC 39867 / T7901), this protein is Ribosome-binding factor A.